The primary structure comprises 535 residues: UDP-glucuronosyltransferase 1A1 (535 aa).

Positions 1–29 (MSVVCRSSCSLLLLPCLLLCVLGPSASHA) are cleaved as a signal peptide. 3 N-linked (GlcNAc...) asparagine glycosylation sites follow: Asn-89, Asn-297, and Asn-435. The chain crosses the membrane as a helical span at residues 493-509 (VIGFLLAIVLTVVFIVY).

Belongs to the UDP-glycosyltransferase family. In terms of assembly, homodimers. Homooligomer. Interacts with UGT1A3, UGT1A4, UGT1A6, UGT1A7, UGT1A8, UGT1A9 and UGT1A10 to form heterodimers.

The protein localises to the endoplasmic reticulum membrane. The enzyme catalyses glucuronate acceptor + UDP-alpha-D-glucuronate = acceptor beta-D-glucuronoside + UDP + H(+). The catalysed reaction is 17beta-estradiol + UDP-alpha-D-glucuronate = 17beta-estradiol 3-O-(beta-D-glucuronate) + UDP + H(+). It carries out the reaction 2-hydroxyestrone + UDP-alpha-D-glucuronate = 2-hydroxyestrone 3-O-(beta-D-glucuronate) + UDP + H(+). It catalyses the reaction 2-hydroxy-17beta-estradiol + UDP-alpha-D-glucuronate = 2-hydroxy-17beta-estradiol 3-O-(beta-D-glucuronate) + UDP + H(+). The enzyme catalyses 2-methoxy-17beta-estradiol + UDP-alpha-D-glucuronate = 2-methoxy-17beta-estradiol 3-O-(beta-D-glucuronate) + UDP + H(+). The catalysed reaction is 17alpha-estradiol + UDP-alpha-D-glucuronate = 17alpha-estradiol 3-O-(beta-D-glucuronate) + UDP + H(+). It carries out the reaction 16beta,17beta-estriol + UDP-alpha-D-glucuronate = 16beta,17beta-estriol 16-O-(beta-D-glucuronate) + UDP + H(+). It catalyses the reaction losartan + UDP-alpha-D-glucuronate = losartan-2-N-beta-D-glucuronide + UDP. The enzyme catalyses prunetin + UDP-alpha-D-glucuronate = prunetin-4'-O-beta-D-glucuronide + UDP. The catalysed reaction is SN-38 + UDP-alpha-D-glucuronate = SN-38 O-beta-D-glucuronide + UDP + H(+). It carries out the reaction (4Z,15Z)-bilirubin IXalpha + UDP-alpha-D-glucuronate = (4Z,15Z)-bilirubin IXalpha C12-beta-D-glucuronoside + UDP. It catalyses the reaction (4Z,15Z)-bilirubin IXalpha + UDP-alpha-D-glucuronate = (4Z,15Z)-bilirubin IXalpha C8-beta-D-glucuronoside + UDP. The enzyme catalyses (4Z,15Z)-bilirubin IXalpha C8-beta-D-glucuronoside + UDP-alpha-D-glucuronate = (4Z,15Z)-bilirubin IXalpha C8,C12-beta-D-bisglucuronoside + UDP. The catalysed reaction is (4Z,15Z)-bilirubin IXalpha C12-beta-D-glucuronoside + UDP-alpha-D-glucuronate = (4Z,15Z)-bilirubin IXalpha C8,C12-beta-D-bisglucuronoside + UDP. It carries out the reaction 8-iso-prostaglandin F2alpha + UDP-alpha-D-glucuronate = 8-iso-prostaglandin F2alpha-glucuronide + UDP + H(+). It catalyses the reaction (5Z,8Z,11Z,14Z)-eicosatetraenoate + UDP-alpha-D-glucuronate = O-[(5Z),(8Z),(11Z),(14Z)-eicosatetraenoyl]-beta-D-glucuronate + UDP. The enzyme catalyses 15-hydroxy-(5Z,8Z,11Z,13E)-eicosatetraenoate + UDP-alpha-D-glucuronate = 15-O-(beta-D-glucuronosyl)-(5Z,8Z,11Z,14Z)-eicosatetraenoate + UDP + H(+). The catalysed reaction is 20-hydroxy-(5Z,8Z,11Z,14Z)-eicosatetraenoate + UDP-alpha-D-glucuronate = 20-O-(beta-D-glucuronosyl)-(5Z,8Z,11Z,14Z)-eicosatetraenoate + UDP + H(+). It carries out the reaction prostaglandin B1 + UDP-alpha-D-glucuronate = 15-O-(beta-D-glucuronosyl)-prostaglandin B1 + UDP + H(+). It catalyses the reaction (E)-ferulate + UDP-alpha-D-glucuronate = (E)-4-O-(beta-D-glucuronosyl)-ferulate + UDP + H(+). The enzyme catalyses (E)-ferulate + UDP-alpha-D-glucuronate = (E)-ferulic acid beta-D-glucuronate ester + UDP. UDP-glucuronosyltransferase (UGT) that catalyzes phase II biotransformation reactions in which lipophilic substrates are conjugated with glucuronic acid to increase the metabolite's water solubility, thereby facilitating excretion into either the urine or bile. Essential for the elimination and detoxification of drugs, xenobiotics and endogenous compounds. Catalyzes the glucuronidation of endogenous estrogen hormones such as estradiol, estrone and estriol. Involved in the glucuronidation of bilirubin, a degradation product occurring in the normal catabolic pathway that breaks down heme in vertebrates. Involved in the glucuronidation of arachidonic acid (AA) and AA-derived eicosanoids including 15-HETE, 20-HETE, PGB1 and F2-isoprostane (8-iso-PGF2alpha). Involved in the glucuronidation of the phytochemical ferulic acid at the phenolic or the carboxylic acid group. Also catalyzes the glucuronidation the isoflavones genistein, daidzein, glycitein, formononetin, biochanin A and prunetin, which are phytoestrogens with anticancer and cardiovascular properties. Involved in the glucuronidation of the AGTR1 angiotensin receptor antagonist losartan, a drug which can inhibit the effect of angiotensin II. Involved in the biotransformation of 7-ethyl-10-hydroxycamptothecin (SN-38), the pharmacologically active metabolite of the anticancer drug irinotecan. This Rattus norvegicus (Rat) protein is UDP-glucuronosyltransferase 1A1.